Reading from the N-terminus, the 90-residue chain is 10 kDa anti-sigma factor (90 aa).

In terms of assembly, interacts with the host sigma factor RpoD, and thereby inhibits its interaction with the catalytic core of the host RNA polymerase.

Transcriptional inhibitor. Inhibits sigma 70-directed transcription by weakening its interaction with the core of the host's RNA polymerase. This allows Gp55 to successfully compete for the core enzyme. Plays an important role during the prereplicative period of phage T4 development. The chain is 10 kDa anti-sigma factor (asiA) from Enterobacteria phage T4 (Bacteriophage T4).